Reading from the N-terminus, the 599-residue chain is Serine hydroxymethyltransferase 6 (599 aa).

The tract at residues M1–P25 is disordered. K374 is subject to N6-(pyridoxal phosphate)lysine.

Belongs to the SHMT family. In terms of assembly, homotetramer. Pyridoxal 5'-phosphate serves as cofactor.

Its subcellular location is the cytoplasm. The catalysed reaction is (6R)-5,10-methylene-5,6,7,8-tetrahydrofolate + glycine + H2O = (6S)-5,6,7,8-tetrahydrofolate + L-serine. It functions in the pathway one-carbon metabolism; tetrahydrofolate interconversion. In terms of biological role, catalyzes the interconversion of serine and glycine. This Arabidopsis thaliana (Mouse-ear cress) protein is Serine hydroxymethyltransferase 6 (SHM6).